A 200-amino-acid polypeptide reads, in one-letter code: Holliday junction branch migration complex subunit RuvA (200 aa).

The interval 1-63 (MIALLTGQIA…EDAILLYGFR (63 aa)) is domain I. The interval 64 to 142 (TRTEKSFFQL…KLDSGSIPAG (79 aa)) is domain II. The tract at residues 143-153 (DAVGRSLPAGS) is flexible linker. The segment at 153-200 (SVLDDVSSALVNLGYKDPQVRKVLAELDCAGSASVEEVLKQALKILMK) is domain III.

It belongs to the RuvA family. As to quaternary structure, homotetramer. Forms an RuvA(8)-RuvB(12)-Holliday junction (HJ) complex. HJ DNA is sandwiched between 2 RuvA tetramers; dsDNA enters through RuvA and exits via RuvB. An RuvB hexamer assembles on each DNA strand where it exits the tetramer. Each RuvB hexamer is contacted by two RuvA subunits (via domain III) on 2 adjacent RuvB subunits; this complex drives branch migration. In the full resolvosome a probable DNA-RuvA(4)-RuvB(12)-RuvC(2) complex forms which resolves the HJ.

The protein localises to the cytoplasm. The RuvA-RuvB-RuvC complex processes Holliday junction (HJ) DNA during genetic recombination and DNA repair, while the RuvA-RuvB complex plays an important role in the rescue of blocked DNA replication forks via replication fork reversal (RFR). RuvA specifically binds to HJ cruciform DNA, conferring on it an open structure. The RuvB hexamer acts as an ATP-dependent pump, pulling dsDNA into and through the RuvAB complex. HJ branch migration allows RuvC to scan DNA until it finds its consensus sequence, where it cleaves and resolves the cruciform DNA. This is Holliday junction branch migration complex subunit RuvA from Trichlorobacter lovleyi (strain ATCC BAA-1151 / DSM 17278 / SZ) (Geobacter lovleyi).